The following is a 339-amino-acid chain: Anthranilate phosphoribosyltransferase (339 aa).

Residues G81, 84-85, T89, 91-94, 109-117, and A121 each bind 5-phospho-alpha-D-ribose 1-diphosphate; these read GD, NIST, and KHGNRNLSS. G81 contacts anthranilate. S93 contributes to the Mg(2+) binding site. N112 contributes to the anthranilate binding site. Position 167 (R167) interacts with anthranilate. D226 and E227 together coordinate Mg(2+).

The protein belongs to the anthranilate phosphoribosyltransferase family. In terms of assembly, homodimer. Mg(2+) is required as a cofactor.

It carries out the reaction N-(5-phospho-beta-D-ribosyl)anthranilate + diphosphate = 5-phospho-alpha-D-ribose 1-diphosphate + anthranilate. It functions in the pathway amino-acid biosynthesis; L-tryptophan biosynthesis; L-tryptophan from chorismate: step 2/5. In terms of biological role, catalyzes the transfer of the phosphoribosyl group of 5-phosphorylribose-1-pyrophosphate (PRPP) to anthranilate to yield N-(5'-phosphoribosyl)-anthranilate (PRA). This is Anthranilate phosphoribosyltransferase from Roseobacter denitrificans (strain ATCC 33942 / OCh 114) (Erythrobacter sp. (strain OCh 114)).